The primary structure comprises 241 residues: F-box protein At3g22350 (241 aa).

In terms of domain architecture, F-box spans 1–44 (MSDLPLDLVEEILSRVSATSLKRLRSTCKQWNTLFKKRSFSQKH).

This is F-box protein At3g22350 from Arabidopsis thaliana (Mouse-ear cress).